A 623-amino-acid polypeptide reads, in one-letter code: Frizzled and smoothened-like protein M (623 aa).

Residues 1 to 18 (MKSIFIIIFILYVFQVNS) form the signal peptide. Over 19-243 (QTIYPIDPSG…WDQLYNLSNT (225 aa)) the chain is Extracellular. Residues 25-163 (DPSGKCEQYI…NYSEFNLTNY (139 aa)) enclose the FZ domain. Cystine bridges form between C30–C100 and C42–C93. N-linked (GlcNAc...) asparagine glycans are attached at residues N57, N106, N109, N154, N159, N169, N199, and N239. Residues 244–264 (LAVLSTFGSLYLLVTFIILNP) form a helical membrane-spanning segment. At 265–273 (KVTSFDRMY) the chain is on the cytoplasmic side. The chain crosses the membrane as a helical span at residues 274 to 294 (GFFNGSVFMMSLSGVILFIAG). Topologically, residues 295-317 (GPRALIKDGGARISVFEDPLCSS) are extracellular. The helical transmembrane segment at 318-338 (TGFIFQLFAINAILFWAYMGF) threads the bilayer. Over 339 to 354 (DLWWRVKYITKPLNIQ) the chain is Cytoplasmic. A helical transmembrane segment spans residues 355–375 (KYYVPIAFTISFIFSVIPLAT). Over 376 to 397 (KNYRMVRGNIHCWVHKAVLQNT) the chain is Extracellular. The helical transmembrane segment at 398–418 (LFFGPLGLTLTISTGFIGLVI) threads the bilayer. Topologically, residues 419–439 (YEIYKIVKATGRGGIMKLEIK) are cytoplasmic. Residues 440 to 460 (PILNIVLIYFSFVYIFAFNFH) traverse the membrane as a helical segment. The Extracellular segment spans residues 461-494 (NDNNSKNTYGSIDEFFQCTLESDDPSKCTVGGPS). The N-linked (GlcNAc...) asparagine glycan is linked to N463. The chain crosses the membrane as a helical span at residues 495-515 (IGSLGYFIYCIRIYGIYCFFL). Over 516 to 623 (QGLNERAFKI…DIEIGSVNIK (108 aa)) the chain is Cytoplasmic. Residues 552-590 (PSESGNSSTTAGTSTTINNSNINKKNNNSKPTLSTMDSN) form a disordered region. Low complexity predominate over residues 555-580 (SGNSSTTAGTSTTINNSNINKKNNNS).

Belongs to the G-protein coupled receptor Fz/Smo family.

It localises to the membrane. This chain is Frizzled and smoothened-like protein M (fslM-1), found in Dictyostelium discoideum (Social amoeba).